We begin with the raw amino-acid sequence, 221 residues long: Endonuclease V (221 aa).

Positions 43 and 111 each coordinate Mg(2+).

Belongs to the endonuclease V family. Mg(2+) serves as cofactor.

It is found in the cytoplasm. It carries out the reaction Endonucleolytic cleavage at apurinic or apyrimidinic sites to products with a 5'-phosphate.. Functionally, DNA repair enzyme involved in the repair of deaminated bases. Selectively cleaves double-stranded DNA at the second phosphodiester bond 3' to a deoxyinosine leaving behind the intact lesion on the nicked DNA. This is Endonuclease V from Azotobacter vinelandii (strain DJ / ATCC BAA-1303).